The chain runs to 541 residues: Nectin 1b (541 aa).

The first 21 residues, 1-21 (MDKQESFFVGHKSHRCSQNRS), serve as a signal peptide directing secretion. Over 22 to 396 (VSQIHQRTSR…PAELHSSGAA (375 aa)) the chain is Extracellular. N-linked (GlcNAc...) asparagine glycans are attached at residues N51, N105, N180, N242, N326, N337, and N372. The 106-residue stretch at 77–182 (GDTVELKCLF…GNRENMVNLT (106 aa)) folds into the Ig-like V-type domain. A disulfide bond links C84 and C165. Ig-like C2-type domains lie at 187–282 (PVTK…VILN) and 287–374 (PEVK…VNVT). Disulfide bonds link C212-C266 and C309-C356. The chain crosses the membrane as a helical span at residues 397–417 (IGGAVGGVALLVAAIALLVFF). At 418-541 (LRRRQRTFKG…SVISKKEWYV (124 aa)) the chain is on the cytoplasmic side. The segment at 440-507 (YSKAGGMPAH…VDEGESRDYD (68 aa)) is disordered. The span at 479 to 493 (SGDRDFDGNSEDLKR) shows a compositional bias: basic and acidic residues.

It belongs to the nectin family. As to quaternary structure, cis- and trans-homodimer. Can form trans-heterodimers. Expressed in the developing eye and nervous system.

The protein localises to the cell membrane. It localises to the cell junction. The protein resides in the adherens junction. Functionally, cell adhesion molecule that promotes cell-cell contacts and plays important roles in the development of the nervous system. Acts by forming homophilic or heterophilic trans-dimers. In Danio rerio (Zebrafish), this protein is Nectin 1b.